The sequence spans 48 residues: M-oxotoxin-Ot1b (48 aa).

Its subcellular location is the secreted. It is found in the target cell membrane. Its function is as follows. Disrupts cell membranes, particularly those rich in phosphocholine, through formation of pores. Has antimicrobial activity, hemolytic activity and insecticidal activity. This Oxyopes takobius (Lynx spider) protein is M-oxotoxin-Ot1b.